We begin with the raw amino-acid sequence, 217 residues long: Uridylate kinase (217 aa).

6-10 (KISGR) provides a ligand contact to ATP. Gly-38 is a UMP binding site. Positions 39 and 43 each coordinate ATP. Residues Asp-60 and 107-113 (FQPGQST) each bind UMP. Residues Asn-134, Tyr-139, and Asp-142 each coordinate ATP.

It belongs to the UMP kinase family. As to quaternary structure, homohexamer.

The protein localises to the cytoplasm. The enzyme catalyses UMP + ATP = UDP + ADP. It functions in the pathway pyrimidine metabolism; CTP biosynthesis via de novo pathway; UDP from UMP (UMPK route): step 1/1. Its activity is regulated as follows. Inhibited by UTP. Its function is as follows. Catalyzes the reversible phosphorylation of UMP to UDP. The polypeptide is Uridylate kinase (Pyrobaculum arsenaticum (strain DSM 13514 / JCM 11321 / PZ6)).